Here is a 342-residue protein sequence, read N- to C-terminus: N-acetyl-gamma-glutamyl-phosphate reductase (342 aa).

Residue Cys148 is part of the active site.

The protein belongs to the NAGSA dehydrogenase family. Type 1 subfamily.

It is found in the cytoplasm. It carries out the reaction N-acetyl-L-glutamate 5-semialdehyde + phosphate + NADP(+) = N-acetyl-L-glutamyl 5-phosphate + NADPH + H(+). It functions in the pathway amino-acid biosynthesis; L-arginine biosynthesis; N(2)-acetyl-L-ornithine from L-glutamate: step 3/4. Functionally, catalyzes the NADPH-dependent reduction of N-acetyl-5-glutamyl phosphate to yield N-acetyl-L-glutamate 5-semialdehyde. In Methanococcus vannielii (strain ATCC 35089 / DSM 1224 / JCM 13029 / OCM 148 / SB), this protein is N-acetyl-gamma-glutamyl-phosphate reductase.